A 324-amino-acid chain; its full sequence is Olfactory receptor 52I1 (324 aa).

The Extracellular portion of the chain corresponds to 1–29; it reads MLGPAYNHTMETPASFLLVGIPGLQSSHL. The N-linked (GlcNAc...) asparagine glycan is linked to asparagine 7. Residues 30 to 50 traverse the membrane as a helical segment; sequence WLAISLSAMYITALLGNTLIV. At 51–58 the chain is on the cytoplasmic side; the sequence is TAIWMDST. The chain crosses the membrane as a helical span at residues 59-79; the sequence is RHEPMYCFLCVLAAVDIVMAS. The Extracellular segment spans residues 80-103; the sequence is SVVPKMVSIFCSGDSSISFSACFT. A disulfide bridge links cysteine 101 with cysteine 193. Residues 104 to 124 form a helical membrane-spanning segment; sequence QMFFVHLATAVETGLLLTMAF. Residues 125 to 143 lie on the Cytoplasmic side of the membrane; that stretch reads DRYVAICKPLHYKRILTPQ. The helical transmembrane segment at 144–164 threads the bilayer; the sequence is VMLGMSMAVTIRAVTFMTPLS. The Extracellular portion of the chain corresponds to 165–200; sequence WMMNHLPFCGSNVVVHSYCKHIALARLACADPVPSS. Residues 201–221 traverse the membrane as a helical segment; it reads LYSLIGSSLMVGSDVAFIAAS. Residues 222–241 lie on the Cytoplasmic side of the membrane; the sequence is YILILRAVFDLSSKTAQLKA. The chain crosses the membrane as a helical span at residues 242–262; the sequence is LSTCGSHVGVMALYYLPGMAS. Residues 263-278 lie on the Extracellular side of the membrane; the sequence is IYAAWLGQDIVPLHTQ. The chain crosses the membrane as a helical span at residues 279 to 299; that stretch reads VLLADLYVIIPATLNPIIYGM. Residues 300–324 lie on the Cytoplasmic side of the membrane; sequence RTKQLLEGIWSYLMHFLFDHSNLGS.

The protein belongs to the G-protein coupled receptor 1 family.

The protein localises to the cell membrane. Functionally, odorant receptor. This is Olfactory receptor 52I1 (OR52I1) from Homo sapiens (Human).